The chain runs to 152 residues: uncharacterized protein (152 aa).

This is an uncharacterized protein from Acanthamoeba polyphaga (Amoeba).